A 166-amino-acid chain; its full sequence is Phospholipase A2 inhibitor clone 06/08 (166 aa).

The first 19 residues, 1–19, serve as a signal peptide directing secretion; sequence MRLILLSGLLLLGIFLANG. The C-type lectin domain occupies 46–161; sequence LRGAFLTVYK…CDDNLLVVCE (116 aa). N-linked (GlcNAc...) asparagine glycans are attached at residues Asn61 and Asn122. Cystine bridges form between Cys83–Cys160 and Cys138–Cys152.

Belongs to the alpha-type phospholipase A2 inhibitor family. Homotrimer; non-covalently linked. In terms of tissue distribution, expressed by the liver.

The protein localises to the secreted. Functionally, this phospholipase A2 inhibitor binds directly phospholipase A2 in the presence or absence of calcium. The sequence is that of Phospholipase A2 inhibitor clone 06/08 from Bothrops neuwiedi (Neuwied's lancehead).